A 483-amino-acid chain; its full sequence is Serine/threonine-protein kinase BSK4 (483 aa).

Gly2 is lipidated: N-myristoyl glycine. In terms of domain architecture, Protein kinase spans 56 to 322 (ENVVSEHGET…DTEVLSHVLM (267 aa)). Residues 62–70 (HGETAPNVV) and Lys84 contribute to the ATP site. The active-site Proton acceptor is Asp178.

The protein belongs to the protein kinase superfamily. Ser/Thr protein kinase family.

It is found in the cell membrane. It carries out the reaction L-seryl-[protein] + ATP = O-phospho-L-seryl-[protein] + ADP + H(+). It catalyses the reaction L-threonyl-[protein] + ATP = O-phospho-L-threonyl-[protein] + ADP + H(+). Probable serine/threonine kinase that acts as a positive regulator of brassinosteroid (BR) signaling downstream of the receptor kinase BRI1. Functions redundantly with BSK3, BSK6, BSK7 and BSK8. The protein is Serine/threonine-protein kinase BSK4 of Arabidopsis thaliana (Mouse-ear cress).